We begin with the raw amino-acid sequence, 435 residues long: Cytidine monophosphate-N-acetylneuraminic acid hydroxylase (435 aa).

The protein belongs to the CMP-Neu5Ac hydroxylase family. [2Fe-2S] cluster is required as a cofactor.

It localises to the cytoplasm. The enzyme catalyses CMP-N-acetyl-beta-neuraminate + 2 Fe(II)-[cytochrome b5] + O2 + 2 H(+) = CMP-N-glycoloyl-beta-neuraminate + 2 Fe(III)-[cytochrome b5] + H2O. It functions in the pathway amino-sugar metabolism; N-acetylneuraminate metabolism. In terms of biological role, sialic acids are components of carbohydrate chains of glycoconjugates and are involved in cell-cell recognition and cell-pathogen interactions. Catalyzes the conversion of CMP-N-acetylneuraminic acid (CMP-Neu5Ac) into its hydroxylated derivative CMP-N-glycolylneuraminic acid (CMP-Neu5Gc), a sialic acid abundantly expressed at the surface of many cells. The sequence is that of Cytidine monophosphate-N-acetylneuraminic acid hydroxylase from Sus scrofa (Pig).